The following is a 209-amino-acid chain: Small ribosomal subunit protein uS4 (209 aa).

Residues 99–159 (SRLDSVCYRM…EKSKAQLRIK (61 aa)) enclose the S4 RNA-binding domain.

The protein belongs to the universal ribosomal protein uS4 family. In terms of assembly, part of the 30S ribosomal subunit. Contacts protein S5. The interaction surface between S4 and S5 is involved in control of translational fidelity.

In terms of biological role, one of the primary rRNA binding proteins, it binds directly to 16S rRNA where it nucleates assembly of the body of the 30S subunit. With S5 and S12 plays an important role in translational accuracy. The polypeptide is Small ribosomal subunit protein uS4 (Thiobacillus denitrificans (strain ATCC 25259 / T1)).